The chain runs to 274 residues: Large ribosomal subunit protein uL2 (274 aa).

Residues 221–256 (RGTAMNPVDHPHGGGEGRNFGKHPVTPWGVPTKGYK) are disordered.

It belongs to the universal ribosomal protein uL2 family. In terms of assembly, part of the 50S ribosomal subunit. Forms a bridge to the 30S subunit in the 70S ribosome.

Functionally, one of the primary rRNA binding proteins. Required for association of the 30S and 50S subunits to form the 70S ribosome, for tRNA binding and peptide bond formation. It has been suggested to have peptidyltransferase activity; this is somewhat controversial. Makes several contacts with the 16S rRNA in the 70S ribosome. The sequence is that of Large ribosomal subunit protein uL2 from Hahella chejuensis (strain KCTC 2396).